Consider the following 221-residue polypeptide: Probable GTP-binding protein EngB (221 aa).

In terms of domain architecture, EngB-type G spans 23–211 (PLREVAFAGR…DNLIIKWLFE (189 aa)). 2 residues coordinate Mg(2+): Ser-38 and Thr-60.

Belongs to the TRAFAC class TrmE-Era-EngA-EngB-Septin-like GTPase superfamily. EngB GTPase family. Requires Mg(2+) as cofactor.

In terms of biological role, necessary for normal cell division and for the maintenance of normal septation. This chain is Probable GTP-binding protein EngB, found in Polynucleobacter asymbioticus (strain DSM 18221 / CIP 109841 / QLW-P1DMWA-1) (Polynucleobacter necessarius subsp. asymbioticus).